Here is a 67-residue protein sequence, read N- to C-terminus: UPF0519 protein C (67 aa).

Residues 18–37 form a disordered region; the sequence is KSQANLNSNSTNSPNNVQGL. Residues 22–33 show a composition bias toward low complexity; it reads NLNSNSTNSPNN.

It belongs to the UPF0519 family.

The protein is UPF0519 protein C of Dictyostelium discoideum (Social amoeba).